Reading from the N-terminus, the 523-residue chain is UDP-glucuronosyltransferase 3A1 (523 aa).

The N-terminal stretch at 1–22 is a signal peptide; the sequence is MAGQQALLLFGFILPGLLFSEA. Topologically, residues 23-483 are extracellular; that stretch reads AKILTVSLVG…HAFQQPWYEQ (461 aa). Residue Asn-52 is glycosylated (N-linked (GlcNAc...) asparagine). Residues 484-504 form a helical membrane-spanning segment; the sequence is YLLDVFLFLLVVTLGTMWLCG. The Cytoplasmic segment spans residues 505 to 523; it reads KLLGLVARWLCGARKLKKA.

This sequence belongs to the UDP-glycosyltransferase family.

The protein localises to the membrane. The catalysed reaction is glucuronate acceptor + UDP-alpha-D-glucuronate = acceptor beta-D-glucuronoside + UDP + H(+). Functionally, UDP-glucuronosyltransferases catalyze phase II biotransformation reactions in which lipophilic substrates are conjugated with glucuronic acid to increase water solubility and enhance excretion. They are of major importance in the conjugation and subsequent elimination of potentially toxic xenobiotics and endogenous compounds. The polypeptide is UDP-glucuronosyltransferase 3A1 (UGT3A1) (Bos taurus (Bovine)).